Consider the following 391-residue polypeptide: Succinyl-diaminopimelate desuccinylase (391 aa).

H78 contacts Zn(2+). D80 is a catalytic residue. D111 contributes to the Zn(2+) binding site. E145 serves as the catalytic Proton acceptor. Zn(2+) is bound by residues E146, E174, and H360.

It belongs to the peptidase M20A family. DapE subfamily. As to quaternary structure, homodimer. Zn(2+) is required as a cofactor. The cofactor is Co(2+).

It carries out the reaction N-succinyl-(2S,6S)-2,6-diaminopimelate + H2O = (2S,6S)-2,6-diaminopimelate + succinate. It functions in the pathway amino-acid biosynthesis; L-lysine biosynthesis via DAP pathway; LL-2,6-diaminopimelate from (S)-tetrahydrodipicolinate (succinylase route): step 3/3. In terms of biological role, catalyzes the hydrolysis of N-succinyl-L,L-diaminopimelic acid (SDAP), forming succinate and LL-2,6-diaminopimelate (DAP), an intermediate involved in the bacterial biosynthesis of lysine and meso-diaminopimelic acid, an essential component of bacterial cell walls. This is Succinyl-diaminopimelate desuccinylase from Acidovorax ebreus (strain TPSY) (Diaphorobacter sp. (strain TPSY)).